Consider the following 359-residue polypeptide: Protein Wnt-5a (359 aa).

An N-terminal signal peptide occupies residues 1–20 (MASRYLTLAAALLASFLQVD). Cys-83 and Cys-94 are joined by a disulfide. N-linked (GlcNAc...) asparagine glycosylation is found at Asn-93 and Asn-99. Disulfide bonds link Cys-133–Cys-141, Cys-143–Cys-161, Cys-217–Cys-231, Cys-219–Cys-226, Cys-288–Cys-319, Cys-304–Cys-314, Cys-318–Cys-358, Cys-334–Cys-349, Cys-336–Cys-346, and Cys-341–Cys-342. The O-palmitoleoyl serine; by PORCN moiety is linked to residue Ser-223. 2 N-linked (GlcNAc...) asparagine glycosylation sites follow: Asn-291 and Asn-305.

Belongs to the Wnt family. Palmitoleoylation is required for efficient binding to frizzled receptors. Depalmitoleoylation leads to Wnt signaling pathway inhibition.

The protein localises to the secreted. It localises to the extracellular space. Its subcellular location is the extracellular matrix. In terms of biological role, ligand for members of the frizzled family of seven transmembrane receptors. Can activate or inhibit canonical Wnt signaling, depending on receptor context. Required during embryogenesis for extension of the primary anterior-posterior axis. This is Protein Wnt-5a (WNT5A) from Pleurodeles waltl (Iberian ribbed newt).